Consider the following 127-residue polypeptide: Small ribosomal subunit protein uS13 (127 aa).

A disordered region spans residues 93–127; the sequence is RQGLPVRGQRTRTNGRTRRGRRVTVAGKKKAPAKK. Residues 101–127 show a composition bias toward basic residues; that stretch reads QRTRTNGRTRRGRRVTVAGKKKAPAKK.

Belongs to the universal ribosomal protein uS13 family. In terms of assembly, part of the 30S ribosomal subunit. Forms a loose heterodimer with protein S19. Forms two bridges to the 50S subunit in the 70S ribosome.

Functionally, located at the top of the head of the 30S subunit, it contacts several helices of the 16S rRNA. In the 70S ribosome it contacts the 23S rRNA (bridge B1a) and protein L5 of the 50S subunit (bridge B1b), connecting the 2 subunits; these bridges are implicated in subunit movement. Contacts the tRNAs in the A and P-sites. The protein is Small ribosomal subunit protein uS13 of Crocosphaera subtropica (strain ATCC 51142 / BH68) (Cyanothece sp. (strain ATCC 51142)).